Reading from the N-terminus, the 61-residue chain is Small ribosomal subunit protein uS14 (61 aa).

4 residues coordinate Zn(2+): cysteine 24, cysteine 27, cysteine 40, and cysteine 43.

Belongs to the universal ribosomal protein uS14 family. Zinc-binding uS14 subfamily. As to quaternary structure, part of the 30S ribosomal subunit. Contacts proteins S3 and S10. Zn(2+) serves as cofactor.

Binds 16S rRNA, required for the assembly of 30S particles and may also be responsible for determining the conformation of the 16S rRNA at the A site. This chain is Small ribosomal subunit protein uS14, found in Clostridium beijerinckii (strain ATCC 51743 / NCIMB 8052) (Clostridium acetobutylicum).